The primary structure comprises 246 residues: Ly6/PLAUR domain-containing protein 4 (246 aa).

Positions Met1–Ala26 are cleaved as a signal peptide. An N-linked (GlcNAc...) asparagine glycan is attached at Asn117. In terms of domain architecture, UPAR/Ly6 spans Cys142–Thr223. Ala225 carries the GPI-anchor amidated alanine lipid modification. Positions Gly226–Gly246 are cleaved as a propeptide — removed in mature form.

It localises to the cell membrane. The chain is Ly6/PLAUR domain-containing protein 4 (LYPD4) from Bos taurus (Bovine).